The primary structure comprises 714 residues: Probable metal-nicotianamine transporter YSL5 (714 aa).

The tract at residues 17–44 is disordered; sequence HELQETGFSPETEKVKNKNFEEDEEEED. Basic and acidic residues predominate over residues 27–36; the sequence is ETEKVKNKNF. 13 consecutive transmembrane segments (helical) span residues 67-87, 90-110, 135-155, 175-195, 236-256, 295-315, 340-360, 413-433, 445-465, 477-497, 531-551, 593-613, and 631-651; these read AFVV…KLNL, GIIP…VKTW, CVVA…LFGM, LGWI…SVVP, VLGK…FFTG, IINI…WPLI, VFIA…KVLS, IPTW…TAIL, ILVI…GAGL, LAIF…LAGL, FVSQ…VFWL, LVLC…KDSL, and FFLG…LFIW.

The protein belongs to the YSL (TC 2.A.67.2) family.

It localises to the membrane. May be involved in the transport of nicotianamine-chelated metals. This chain is Probable metal-nicotianamine transporter YSL5 (YSL5), found in Arabidopsis thaliana (Mouse-ear cress).